The chain runs to 319 residues: 4-hydroxy-3-methylbut-2-enyl diphosphate reductase (319 aa).

Residue Cys12 participates in [4Fe-4S] cluster binding. The (2E)-4-hydroxy-3-methylbut-2-enyl diphosphate site is built by His41 and His74. The dimethylallyl diphosphate site is built by His41 and His74. Residues His41 and His74 each coordinate isopentenyl diphosphate. A [4Fe-4S] cluster-binding site is contributed by Cys96. (2E)-4-hydroxy-3-methylbut-2-enyl diphosphate is bound at residue His124. His124 contributes to the dimethylallyl diphosphate binding site. Residue His124 coordinates isopentenyl diphosphate. Glu126 (proton donor) is an active-site residue. (2E)-4-hydroxy-3-methylbut-2-enyl diphosphate is bound at residue Thr167. Cys197 is a [4Fe-4S] cluster binding site. Residues Ser225, Ser226, Asn227, and Ser269 each coordinate (2E)-4-hydroxy-3-methylbut-2-enyl diphosphate. Residues Ser225, Ser226, Asn227, and Ser269 each coordinate dimethylallyl diphosphate. Positions 225, 226, 227, and 269 each coordinate isopentenyl diphosphate.

It belongs to the IspH family. As to quaternary structure, homodimer. Requires [4Fe-4S] cluster as cofactor.

The enzyme catalyses isopentenyl diphosphate + 2 oxidized [2Fe-2S]-[ferredoxin] + H2O = (2E)-4-hydroxy-3-methylbut-2-enyl diphosphate + 2 reduced [2Fe-2S]-[ferredoxin] + 2 H(+). It carries out the reaction dimethylallyl diphosphate + 2 oxidized [2Fe-2S]-[ferredoxin] + H2O = (2E)-4-hydroxy-3-methylbut-2-enyl diphosphate + 2 reduced [2Fe-2S]-[ferredoxin] + 2 H(+). Its pathway is isoprenoid biosynthesis; dimethylallyl diphosphate biosynthesis; dimethylallyl diphosphate from (2E)-4-hydroxy-3-methylbutenyl diphosphate: step 1/1. The protein operates within isoprenoid biosynthesis; isopentenyl diphosphate biosynthesis via DXP pathway; isopentenyl diphosphate from 1-deoxy-D-xylulose 5-phosphate: step 6/6. Its function is as follows. Catalyzes the conversion of 1-hydroxy-2-methyl-2-(E)-butenyl 4-diphosphate (HMBPP) into a mixture of isopentenyl diphosphate (IPP) and dimethylallyl diphosphate (DMAPP). Acts in the terminal step of the DOXP/MEP pathway for isoprenoid precursor biosynthesis. This is 4-hydroxy-3-methylbut-2-enyl diphosphate reductase from Buchnera aphidicola subsp. Acyrthosiphon pisum (strain Tuc7).